The sequence spans 219 residues: Thiopurine S-methyltransferase (219 aa).

Trp-10, Leu-45, Glu-66, and Arg-130 together coordinate S-adenosyl-L-methionine.

It belongs to the class I-like SAM-binding methyltransferase superfamily. TPMT family.

The protein resides in the cytoplasm. The catalysed reaction is S-adenosyl-L-methionine + a thiopurine = S-adenosyl-L-homocysteine + a thiopurine S-methylether.. This chain is Thiopurine S-methyltransferase, found in Psychrobacter cryohalolentis (strain ATCC BAA-1226 / DSM 17306 / VKM B-2378 / K5).